We begin with the raw amino-acid sequence, 512 residues long: Cytochrome P450 76C2 (512 aa).

Residues isoleucine 3–phenylalanine 23 form a helical membrane-spanning segment. Position 451 (cysteine 451) interacts with heme.

This sequence belongs to the cytochrome P450 family. Heme serves as cofactor.

It is found in the membrane. The polypeptide is Cytochrome P450 76C2 (CYP76C2) (Arabidopsis thaliana (Mouse-ear cress)).